Here is a 558-residue protein sequence, read N- to C-terminus: 2-isopropylmalate synthase (558 aa).

The region spanning 31-306 is the Pyruvate carboxyltransferase domain; sequence PIWCAVDLRD…DPGIDFSNID (276 aa). 4 residues coordinate Mg(2+): Asp-40, His-245, His-247, and Asn-281. Residues 440–558 are regulatory domain; that stretch reads AGSPYSFLEH…LCAANHLSDK (119 aa).

Belongs to the alpha-IPM synthase/homocitrate synthase family. LeuA type 2 subfamily. In terms of assembly, homodimer. Mg(2+) serves as cofactor.

The protein resides in the cytoplasm. It carries out the reaction 3-methyl-2-oxobutanoate + acetyl-CoA + H2O = (2S)-2-isopropylmalate + CoA + H(+). Its pathway is amino-acid biosynthesis; L-leucine biosynthesis; L-leucine from 3-methyl-2-oxobutanoate: step 1/4. Its function is as follows. Catalyzes the condensation of the acetyl group of acetyl-CoA with 3-methyl-2-oxobutanoate (2-ketoisovalerate) to form 3-carboxy-3-hydroxy-4-methylpentanoate (2-isopropylmalate). In Rhodospirillum rubrum (strain ATCC 11170 / ATH 1.1.1 / DSM 467 / LMG 4362 / NCIMB 8255 / S1), this protein is 2-isopropylmalate synthase.